The primary structure comprises 75 residues: Probable pilin MJ1469 (75 aa).

The propeptide occupies 1-11 (MKPKKIISNKA). The QXSXEXXXL signature appears at 12 to 20 (QISLELALL).

In terms of processing, the N-terminus is cleaved by the prepilin peptidase EppA, which recognizes the class III signal sequence.

The protein resides in the secreted. It localises to the cell surface. The protein localises to the fimbrium. In Methanocaldococcus jannaschii (strain ATCC 43067 / DSM 2661 / JAL-1 / JCM 10045 / NBRC 100440) (Methanococcus jannaschii), this protein is Probable pilin MJ1469.